A 235-amino-acid polypeptide reads, in one-letter code: Glucosamine-6-phosphate deaminase (235 aa).

Asp-62 (proton acceptor; for enolization step) is an active-site residue. Asn-128 functions as the For ring-opening step in the catalytic mechanism. The Proton acceptor; for ring-opening step role is filled by His-130. Glu-135 serves as the catalytic For ring-opening step.

It belongs to the glucosamine/galactosamine-6-phosphate isomerase family. NagB subfamily.

It catalyses the reaction alpha-D-glucosamine 6-phosphate + H2O = beta-D-fructose 6-phosphate + NH4(+). Its pathway is amino-sugar metabolism; N-acetylneuraminate degradation; D-fructose 6-phosphate from N-acetylneuraminate: step 5/5. Its function is as follows. Catalyzes the reversible isomerization-deamination of glucosamine 6-phosphate (GlcN6P) to form fructose 6-phosphate (Fru6P) and ammonium ion. This is Glucosamine-6-phosphate deaminase from Streptococcus pneumoniae (strain JJA).